The following is a 196-amino-acid chain: Protein GrpE (196 aa).

The segment at methionine 1 to aspartate 41 is disordered.

The protein belongs to the GrpE family. As to quaternary structure, homodimer.

The protein resides in the cytoplasm. Participates actively in the response to hyperosmotic and heat shock by preventing the aggregation of stress-denatured proteins, in association with DnaK and GrpE. It is the nucleotide exchange factor for DnaK and may function as a thermosensor. Unfolded proteins bind initially to DnaJ; upon interaction with the DnaJ-bound protein, DnaK hydrolyzes its bound ATP, resulting in the formation of a stable complex. GrpE releases ADP from DnaK; ATP binding to DnaK triggers the release of the substrate protein, thus completing the reaction cycle. Several rounds of ATP-dependent interactions between DnaJ, DnaK and GrpE are required for fully efficient folding. The chain is Protein GrpE from Klebsiella pneumoniae (strain 342).